The sequence spans 36 residues: Kappa-actitoxin-Avd6a (36 aa).

The region spanning 2 to 36 (CKDNFAAATCKHVKENKNCGSQKYATNCAKTCGKC) is the ShKT domain. 3 disulfides stabilise this stretch: Cys2/Cys36, Cys11/Cys29, and Cys20/Cys33. Residues 24 to 25 (KY) are crucial for binding to potassium channels.

The protein belongs to the sea anemone type 1 potassium channel toxin family. Type 1b subfamily.

It is found in the secreted. The protein localises to the nematocyst. Functionally, blocks voltage-gated potassium channels Kv1.2/KCNA2 (IC(50)=140 nM). This Anemonia sulcata (Mediterranean snakelocks sea anemone) protein is Kappa-actitoxin-Avd6a.